Here is a 343-residue protein sequence, read N- to C-terminus: Methionine import ATP-binding protein MetN 2 (343 aa).

One can recognise an ABC transporter domain in the interval 2–241 (IEFKDVTKTF…PQQAVTKRFV (240 aa)). Residue 38–45 (GYSGAGKS) coordinates ATP.

Belongs to the ABC transporter superfamily. Methionine importer (TC 3.A.1.24) family. The complex is composed of two ATP-binding proteins (MetN), two transmembrane proteins (MetI) and a solute-binding protein (MetQ).

It localises to the cell membrane. It catalyses the reaction L-methionine(out) + ATP + H2O = L-methionine(in) + ADP + phosphate + H(+). The enzyme catalyses D-methionine(out) + ATP + H2O = D-methionine(in) + ADP + phosphate + H(+). Functionally, part of the ABC transporter complex MetNIQ involved in methionine import. Responsible for energy coupling to the transport system. The chain is Methionine import ATP-binding protein MetN 2 from Lactiplantibacillus plantarum (strain ATCC BAA-793 / NCIMB 8826 / WCFS1) (Lactobacillus plantarum).